The chain runs to 424 residues: MSDDDCDIFSAARKRIPEIALPKNPYNLGNDSFSKEVDYDFIEDLPKKSTKTGKRKNPAATRKNPPKSQDDASPPKQAEHKAVEPEEDMRTERSLSPVSLLILEMEKKNGQQSDVEKHAKENDVGPVARRTRSSLNRSEMAPPPVSPTVEVPTQTKPKKRGQKKRTSLTTTTSNSASMEVSLPSIVGQNNEHISRRWTLAEVAARSKVVDSIDLVSAVAPRVEGFVNLDSEDEGEKEAPPVVEEENIFDNDNPTIEVALSWLGEIQIYKLRQHQKFKHLFKELASRNGIDENDITVDMYYNFVGPEDTPHSIGLKSFHTLTGHPTKSHNNNNVAAKIDYNPEALCRKPKKFQVKVQADKWKHPLVIPMKKTDNFKIIFIKCAEELNCDPRTIKLFFDGDLLDPNDTPNNQDMEGNEVIDLKIKA.

Position 26 is a phosphotyrosine (Tyr26). Phosphoserine is present on residues Ser32 and Ser34. A disordered region spans residues 45–177; the sequence is LPKKSTKTGK…LTTTTSNSAS (133 aa). Positions 48–57 are enriched in basic residues; that stretch reads KSTKTGKRKN. Residues 77-93 are compositionally biased toward basic and acidic residues; the sequence is QAEHKAVEPEEDMRTER. Ser96 carries the phosphoserine modification. Positions 104–123 are enriched in basic and acidic residues; that stretch reads EMEKKNGQQSDVEKHAKEND. The segment covering 156 to 166 has biased composition (basic residues); it reads KPKKRGQKKRT. Residues 167-177 are compositionally biased toward low complexity; sequence SLTTTTSNSAS.

Forms a complex with dgrn; likely required for localization to the nuclear periphery. Interacts with the SMC5-SMC6 complex members SMC5 and SMC6/jnj following ionizing radiation (IR) to induce DNA damage. Interaction between the SMC5-SMC6 complex and the dgrn-Rad60 complex, may stabilize the association of heterochromatic DSBs with the nuclear periphery.

The protein resides in the nucleus. Its subcellular location is the nucleoplasm. In terms of biological role, required for repair of DNA double strand breaks which occur during replication or are induced by ionizing radiation (IR). Functions with dgrn and downstream of the SMC5-SMC6 complex to regulate strand break repair. Likely functions by stabilizing the association of heterochromatic double strand breaks (DSBs) with the nuclear periphery as part of the homologous recombination (HR) repair process. This chain is DNA repair protein Rad60, found in Drosophila melanogaster (Fruit fly).